The primary structure comprises 212 residues: External core antigen (212 aa).

The N-terminal stretch at 1-19 (MQLFHLCLIISCSCPTVQA) is a signal peptide. The interval 25–27 (GWL) is HBEAG. The interval 172 to 212 (LPETTVVRRRGRSPRRRTPSPRRRRSQSPRRRRSQSRESQC) is disordered. Over residues 178 to 205 (VRRRGRSPRRRTPSPRRRRSQSPRRRRS) the composition is skewed to basic residues. One copy of the 1; half-length repeat lies at 184–190 (SPRRRTP). The 3 X 8 AA repeats of S-P-R-R-R-R-S-Q stretch occupies residues 184–206 (SPRRRTPSPRRRRSQSPRRRRSQ). The propeptide occupies 184 to 212 (SPRRRTPSPRRRRSQSPRRRRSQSRESQC). Tandem repeats lie at residues 191–198 (SPRRRRSQ) and 199–206 (SPRRRRSQ).

Belongs to the orthohepadnavirus precore antigen family. As to quaternary structure, homodimerizes. Phosphorylated. In terms of processing, cleaved by host furin.

The protein localises to the secreted. Its subcellular location is the host nucleus. May regulate immune response to the intracellular capsid in acting as a T-cell tolerogen, by having an immunoregulatory effect which prevents destruction of infected cells by cytotoxic T-cells. This immune regulation may predispose to chronicity during perinatal infections and prevent severe liver injury during adult infections. This Hepatitis B virus genotype D (isolate Germany/1-91/1991) (HBV-D) protein is External core antigen.